A 306-amino-acid polypeptide reads, in one-letter code: Curved DNA-binding protein (306 aa).

Positions 5–69 (DYYAIMGVKP…QRRAEYDQMW (65 aa)) constitute a J domain.

It is found in the cytoplasm. The protein resides in the nucleoid. Functionally, DNA-binding protein that preferentially recognizes a curved DNA sequence. It is probably a functional analog of DnaJ; displays overlapping activities with DnaJ, but functions under different conditions, probably acting as a molecular chaperone in an adaptive response to environmental stresses other than heat shock. Lacks autonomous chaperone activity; binds native substrates and targets them for recognition by DnaK. Its activity is inhibited by the binding of CbpM. The polypeptide is Curved DNA-binding protein (Escherichia coli O127:H6 (strain E2348/69 / EPEC)).